A 97-amino-acid polypeptide reads, in one-letter code: MANSKSALKRIRTSERNRLRNKSYKSAVRTLMKKYLQAVEEYAASPTPENKAVVDQRMSAAYSKIDKAVKRSVLHRNNGARKKARLAKALQQVASAS.

The disordered stretch occupies residues 1 to 22 (MANSKSALKRIRTSERNRLRNK).

Belongs to the bacterial ribosomal protein bS20 family.

Its function is as follows. Binds directly to 16S ribosomal RNA. This Crocosphaera subtropica (strain ATCC 51142 / BH68) (Cyanothece sp. (strain ATCC 51142)) protein is Small ribosomal subunit protein bS20.